A 357-amino-acid chain; its full sequence is Protein-arginine kinase (357 aa).

Residues 24 to 255 enclose the Phosphagen kinase C-terminal domain; it reads IVISTRLRIA…RQIIEQERVA (232 aa). ATP is bound by residues 27-31, His92, Arg126, 177-181, and 208-213; these read STRLR, RASVM, and RGIYGE. The short motif at 338 to 343 is the RDXXRA motif of the pArg binding pocket involved in allosteric regulation element; that stretch reads RDERRA.

Belongs to the ATP:guanido phosphotransferase family.

It catalyses the reaction L-arginyl-[protein] + ATP = N(omega)-phospho-L-arginyl-[protein] + ADP + H(+). With respect to regulation, appears to be allosterically activated by the binding of pArg-containing polypeptides to the pArg-binding pocket localized in the C-terminal domain of McsB. Catalyzes the specific phosphorylation of arginine residues in proteins. The sequence is that of Protein-arginine kinase from Brevibacillus brevis (strain 47 / JCM 6285 / NBRC 100599).